The sequence spans 352 residues: NAD(+)-dependent homoserine dehydrogenase (352 aa).

It belongs to the homoserine dehydrogenase family.

It catalyses the reaction L-homoserine + NAD(+) = L-aspartate 4-semialdehyde + NADH + H(+). Functionally, dehydrogenase involved in the degradation of canavanine, the delta-oxa-analog of arginine, allowing growth on canavanine as sole nitrogen and carbon source. Catalyzes the conversion of homoserine and NAD(+) to aspartate-semialdehyde and NADH. Is highly specific for NAD(+) and cannot use NADP(+). The chain is NAD(+)-dependent homoserine dehydrogenase from Pseudomonas canavaninivorans.